A 698-amino-acid polypeptide reads, in one-letter code: tRNA (guanine(37)-N(1))-methyltransferase (698 aa).

The tract at residues 207 to 242 is disordered; the sequence is SPPSVSLTENQDGDPQAQDSLRAVAAPPSPSSRKRG. Residues His-427, 465–466, 494–495, and Asn-536 each bind S-adenosyl-L-methionine; these read DL and DG.

This sequence belongs to the class I-like SAM-binding methyltransferase superfamily. TRM5/TYW2 family. In terms of assembly, monomer.

It is found in the mitochondrion matrix. The protein resides in the nucleus. The protein localises to the cytoplasm. The catalysed reaction is guanosine(37) in tRNA + S-adenosyl-L-methionine = N(1)-methylguanosine(37) in tRNA + S-adenosyl-L-homocysteine + H(+). Functionally, specifically methylates the N1 position of guanosine-37 in various cytoplasmic and mitochondrial tRNAs. Methylation is not dependent on the nature of the nucleoside 5' of the target nucleoside. This is the first step in the biosynthesis of wybutosine (yW), a modified base adjacent to the anticodon of tRNAs and required for accurate decoding. This chain is tRNA (guanine(37)-N(1))-methyltransferase, found in Leishmania braziliensis.